Here is a 371-residue protein sequence, read N- to C-terminus: MKNNKDTRVVVGMSGGVDSSVAALLLKQQGYDVVGIFMKNWDDTDEFGVCTATEDFDDVVRVCNQLEIPYYSVNFEKQYWDKVFTYFLDEYKAGRTPNPDVMCNKEIKFKAFLDHALALGADYLATGHYAQVRRDKNGRVEMLRGNDENKDQTYFLNQLSEDVLDKVMFPLGHLPKSEVRKIAKEHELVTAEKKDSTGICFIGERNFKEFLSEYLPAQPGEMQTLDGIVKGSHDGLMYYTLGQRQGLGIGGSGDPWFVVGKNLTDNILYVGQGYENDYLYSNALVATDINWIQPDKISDTFNCTAKFRYRQQDSEVNVTIKSENEVYVAFKEDQRAITPGQAVVFYDGEVCLGGGTIDTIIKNDHKLDYVG.

Residues 12 to 19 and Met-38 contribute to the ATP site; that span reads GMSGGVDS. An interaction with target base in tRNA region spans residues 98–100; sequence NPD. Cys-103 acts as the Nucleophile in catalysis. A disulfide bond links Cys-103 and Cys-200. Gly-127 contacts ATP. Residues 150 to 152 form an interaction with tRNA region; the sequence is KDQ. Catalysis depends on Cys-200, which acts as the Cysteine persulfide intermediate. The interval 308–309 is interaction with tRNA; it reads RY.

It belongs to the MnmA/TRMU family.

The protein localises to the cytoplasm. The catalysed reaction is S-sulfanyl-L-cysteinyl-[protein] + uridine(34) in tRNA + AH2 + ATP = 2-thiouridine(34) in tRNA + L-cysteinyl-[protein] + A + AMP + diphosphate + H(+). Functionally, catalyzes the 2-thiolation of uridine at the wobble position (U34) of tRNA, leading to the formation of s(2)U34. This Oceanobacillus iheyensis (strain DSM 14371 / CIP 107618 / JCM 11309 / KCTC 3954 / HTE831) protein is tRNA-specific 2-thiouridylase MnmA.